We begin with the raw amino-acid sequence, 757 residues long: Probable phospholipase C20G8.02, mitochondrial (757 aa).

Residues 1–13 (MILYIVLPFYVRT) constitute a mitochondrion transit peptide. A disordered region spans residues 289–330 (ESNSKPSTPVPTEELTSTTLLNDSSDPSDNFTPSNTESTIDL). Positions 302-329 (ELTSTTLLNDSSDPSDNFTPSNTESTID) are enriched in polar residues. The active site involves Ser524. Residues 547 to 757 (LDFPVANFFA…LAHFILTQLL (211 aa)) form the DDHD domain.

It belongs to the PA-PLA1 family.

It localises to the mitochondrion. Its function is as follows. Probable phospholipase that hydrolyzes phosphatidic acid. The sequence is that of Probable phospholipase C20G8.02, mitochondrial from Schizosaccharomyces pombe (strain 972 / ATCC 24843) (Fission yeast).